The primary structure comprises 190 residues: uncharacterized protein (190 aa).

This is an uncharacterized protein from Aquifex aeolicus (strain VF5).